The following is a 438-amino-acid chain: Cell division cycle-associated 7-like protein (438 aa).

The Integrase domain-binding motif 1 (IBM1) motif lies at 9–33 (IPKEVADIFSAPSDDEEFVGFQDDV). Residue Ser21 is modified to Phosphoserine. Residues 56-115 (VCFRSKYFTEELRRIFKEDTDSEMEDFEGFTESELNMSSNPELMESELSDSDKAYPVMND) form a PSIP1-binding region. The Integrase domain-binding motif 2 (IBM2) motif lies at 63 to 89 (FTEELRRIFKEDTDSEMEDFEGFTESE). Positions 74–199 (DTDSEMEDFE…ESRAESQENS (126 aa)) are disordered. Thr75 is modified (phosphothreonine). The span at 75 to 86 (TDSEMEDFEGFT) shows a compositional bias: acidic residues. At Ser77 the chain carries Phosphoserine. Thr86 carries the phosphothreonine modification. A phosphoserine mark is found at Ser101, Ser104, Ser135, Ser136, and Ser159. Residues 152-167 (RTPDKDSSHLLDSKTD) show a composition bias toward basic and acidic residues. The segment covering 168 to 177 (LRRKKSSRQP) has biased composition (basic residues). Phosphoserine is present on residues Ser183 and Ser185. An MYC-binding region spans residues 201 to 223 (ALLKRAMNIKENKAMLAQLLAEL). Glycyl lysine isopeptide (Lys-Gly) (interchain with G-Cter in SUMO2) cross-links involve residues Lys210 and Lys213. The residue at position 249 (Ser249) is a Phosphoserine.

Interacts with MYC. Interacts (via IBM motifs) with PSIP1 (via IBD domain); phosphorylation increases its affinity for PSIP1. In terms of processing, phosphorylation increases its interaction with PSIP1. Expressed in all tissues but not detected in total brain.

The protein resides in the cytoplasm. It localises to the nucleus. Plays a role in transcriptional regulation as a repressor that inhibits monoamine oxidase A (MAOA) activity and gene expression by binding to the promoter. Plays an important oncogenic role in mediating the full transforming effect of MYC in medulloblastoma cells. Involved in apoptotic signaling pathways; May act downstream of P38-kinase and BCL-2, but upstream of CASP3/caspase-3 as well as CCND1/cyclin D1 and E2F1. This is Cell division cycle-associated 7-like protein (Cdca7l) from Mus musculus (Mouse).